The sequence spans 132 residues: Outer membrane protein assembly factor BamE (132 aa).

Residues 1 to 16 form the signal peptide; it reads MQKLVLTLLVTSLLAG. The N-palmitoyl cysteine moiety is linked to residue Cys-17. A lipid anchor (S-diacylglycerol cysteine) is attached at Cys-17.

Belongs to the BamE family. In terms of assembly, part of the Bam complex.

The protein localises to the cell outer membrane. In terms of biological role, part of the outer membrane protein assembly complex, which is involved in assembly and insertion of beta-barrel proteins into the outer membrane. This is Outer membrane protein assembly factor BamE from Acinetobacter pittii (strain PHEA-2).